The sequence spans 921 residues: Isoleucine--tRNA ligase (921 aa).

Positions 59-69 (PYANGHLHIGH) match the 'HIGH' region motif. Glu569 provides a ligand contact to L-isoleucyl-5'-AMP. Residues 610–614 (KMSKS) carry the 'KMSKS' region motif. Lys613 is a binding site for ATP. Residues Cys896, Cys899, Cys911, and Cys914 each contribute to the Zn(2+) site.

It belongs to the class-I aminoacyl-tRNA synthetase family. IleS type 1 subfamily. In terms of assembly, monomer. Requires Zn(2+) as cofactor.

Its subcellular location is the cytoplasm. It carries out the reaction tRNA(Ile) + L-isoleucine + ATP = L-isoleucyl-tRNA(Ile) + AMP + diphosphate. Catalyzes the attachment of isoleucine to tRNA(Ile). As IleRS can inadvertently accommodate and process structurally similar amino acids such as valine, to avoid such errors it has two additional distinct tRNA(Ile)-dependent editing activities. One activity is designated as 'pretransfer' editing and involves the hydrolysis of activated Val-AMP. The other activity is designated 'posttransfer' editing and involves deacylation of mischarged Val-tRNA(Ile). This chain is Isoleucine--tRNA ligase, found in Campylobacter hominis (strain ATCC BAA-381 / DSM 21671 / CCUG 45161 / LMG 19568 / NCTC 13146 / CH001A).